A 203-amino-acid chain; its full sequence is Early nodulin-like protein 9 (203 aa).

The first 27 residues, 1 to 27 (MARNLKSMMLCGFGLLCFLMIVDRAYA), serve as a signal peptide directing secretion. Positions 28–130 (REFTVGGATG…NEKLVVIVMA (103 aa)) constitute a Phytocyanin domain. An intrachain disulfide couples Cys-84 to Cys-118. Residue Asn-103 is glycosylated (N-linked (GlcNAc...) asparagine). Residues 134–181 (GNKNTASSPPSPAPAPSGESAPSPPVSGTFEMTPAPTPTTSEDTPNSA) form a disordered region. Ser-180 carries the GPI-anchor amidated serine lipid modification. A propeptide spans 181-203 (AASSLSFVAALLGAALASTLFLH) (removed in mature form).

Belongs to the early nodulin-like (ENODL) family. In terms of tissue distribution, specifically observed at the plasma membrane of sieve elements in vascular tissues of leaves, stems, roots, flowers and reproductive organs. Absent from companion cells.

The protein localises to the cell membrane. May act as a carbohydrate transporter. Mainly required for reproductive functions. The sequence is that of Early nodulin-like protein 9 from Arabidopsis thaliana (Mouse-ear cress).